Here is a 249-residue protein sequence, read N- to C-terminus: Phosphate import ATP-binding protein PstB (249 aa).

Positions 4–244 (VKIKDLSLFY…PQDKRTEDYI (241 aa)) constitute an ABC transporter domain. 36–43 (GPSGCGKS) lines the ATP pocket.

This sequence belongs to the ABC transporter superfamily. Phosphate importer (TC 3.A.1.7) family. The complex is composed of two ATP-binding proteins (PstB), two transmembrane proteins (PstC and PstA) and a solute-binding protein (PstS).

It is found in the cell membrane. The enzyme catalyses phosphate(out) + ATP + H2O = ADP + 2 phosphate(in) + H(+). In terms of biological role, part of the ABC transporter complex PstSACB involved in phosphate import. Responsible for energy coupling to the transport system. This Clostridium tetani (strain Massachusetts / E88) protein is Phosphate import ATP-binding protein PstB.